The primary structure comprises 268 residues: Thiazole synthase (268 aa).

The active-site Schiff-base intermediate with DXP is the Lys-100. 1-deoxy-D-xylulose 5-phosphate contacts are provided by residues Gly-161, 187-188 (AG), and 209-210 (NT). Residues 248 to 268 (ATPSSPSEGMITGSPHSAANN) are disordered.

The protein belongs to the ThiG family. Homotetramer. Forms heterodimers with either ThiH or ThiS.

The protein resides in the cytoplasm. It catalyses the reaction [ThiS sulfur-carrier protein]-C-terminal-Gly-aminoethanethioate + 2-iminoacetate + 1-deoxy-D-xylulose 5-phosphate = [ThiS sulfur-carrier protein]-C-terminal Gly-Gly + 2-[(2R,5Z)-2-carboxy-4-methylthiazol-5(2H)-ylidene]ethyl phosphate + 2 H2O + H(+). It participates in cofactor biosynthesis; thiamine diphosphate biosynthesis. Catalyzes the rearrangement of 1-deoxy-D-xylulose 5-phosphate (DXP) to produce the thiazole phosphate moiety of thiamine. Sulfur is provided by the thiocarboxylate moiety of the carrier protein ThiS. In vitro, sulfur can be provided by H(2)S. In Nitrosomonas eutropha (strain DSM 101675 / C91 / Nm57), this protein is Thiazole synthase.